We begin with the raw amino-acid sequence, 415 residues long: Thyroxine-binding globulin (415 aa).

The N-terminal stretch at 1-20 is a signal peptide; sequence MSPFLYLVLLVLGLHATIHC. Residues Asn-36, Asn-99, Asn-165, and Asn-253 are each glycosylated (N-linked (GlcNAc...) asparagine). Residues Asn-293 and Arg-398 each contribute to the thyroxine site.

The protein belongs to the serpin family.

Its subcellular location is the secreted. Functionally, major thyroid hormone transport protein in serum. The polypeptide is Thyroxine-binding globulin (SERPINA7) (Pan troglodytes (Chimpanzee)).